We begin with the raw amino-acid sequence, 183 residues long: Hypoxanthine-guanine-xanthine phosphoribosyltransferase (183 aa).

Residues 102-110, Lys-134, and Asp-163 each bind GMP; that span reads EDIIDTGLT. Catalysis depends on Asp-106, which acts as the Proton acceptor. Residue Asp-163 coordinates Mg(2+).

In terms of assembly, homodimer. The cofactor is Mg(2+).

Its subcellular location is the cytoplasm. It catalyses the reaction IMP + diphosphate = hypoxanthine + 5-phospho-alpha-D-ribose 1-diphosphate. The catalysed reaction is GMP + diphosphate = guanine + 5-phospho-alpha-D-ribose 1-diphosphate. It carries out the reaction XMP + diphosphate = xanthine + 5-phospho-alpha-D-ribose 1-diphosphate. Its pathway is purine metabolism; GMP biosynthesis via salvage pathway; GMP from guanine: step 1/1. The protein operates within purine metabolism; IMP biosynthesis via salvage pathway; IMP from hypoxanthine: step 1/1. It participates in purine metabolism; XMP biosynthesis via salvage pathway; XMP from xanthine: step 1/1. Its function is as follows. Essential in nucleic acid metabolism of T.foetus because the parasite is unable to synthesize purine nucleotides de novo and relies on the HGXPRTase activities for its purine requirements by salvaging purine bases from the host. Works with guanine, hypoxanthine and xanthine. The chain is Hypoxanthine-guanine-xanthine phosphoribosyltransferase (HPT) from Tritrichomonas foetus (Trichomonas foetus).